We begin with the raw amino-acid sequence, 591 residues long: Acyl-CoA-dependent acyltransferase MAC1 (591 aa).

The tract at residues 589 to 591 is peroxisomal targeting signal type 1; sequence ARL.

Belongs to the trichothecene O-acetyltransferase family.

The protein localises to the peroxisome. It functions in the pathway secondary metabolite biosynthesis. Acyl-CoA-dependent acyltransferase; part of the gene cluster that mediates the biosynthesis of mannosylerythritol lipids (MELs), surface-active substances that enhance the availability of water-insoluble substrates. Mannosylerythritol lipid production is responsible for hemolytic activity of Ustilago maydis. Depending on the number of acetyl groups, mannosylerythritol lipids can be differentiated into MEL A (fully acetylated), MEL B and MEL C (monoacetylated at R-6 and R-4, respectively), and the fully deacetylated MEL D. The first step in the pathway is the generation of mannosylerythritol by the glycosyltransferase EMT1 which catalyzes the transfer of GDP-mannose to the C-4 atom of meso-erythritol. This reaction has to be stereospecific, since only mannosyl-D-erythritol is generated. The produced disaccharide is subsequently acylated with fatty acids of various lengths derived from the peroxisomal beta-oxidation by the peroxisomal acyltransferases MAC1 and MAC2 at positions C-2 and C-3, repectively. The existence of MEL derivatives which carry an acetyl group at C-2 implies that at least MAC1 also accepts acetyl-CoA as a donor. The final step of MEL biosynthesis is the acetylation of the fully acylated mannosylerythritol lipids catalyzed by the acetyl-CoA-dependent acetyltransferase MAT1. MAT1 displays a relaxed regioselectivity and is able to transfer acetylgroups to both positions C-4 and C-6 of the mannosyl moiety. In Mycosarcoma maydis (Corn smut fungus), this protein is Acyl-CoA-dependent acyltransferase MAC1.